Reading from the N-terminus, the 370-residue chain is tRNA-specific 2-thiouridylase MnmA (370 aa).

Residues 12-19 and Met-38 contribute to the ATP site; that span reads GLSGGVDS. The tract at residues 98–100 is interaction with target base in tRNA; that stretch reads NPD. The Nucleophile role is filled by Cys-103. Cys-103 and Cys-201 form a disulfide bridge. Residue Gly-127 coordinates ATP. The segment at 151-153 is interaction with tRNA; that stretch reads KDQ. Cys-201 functions as the Cysteine persulfide intermediate in the catalytic mechanism. Residues 319 to 320 are interaction with tRNA; that stretch reads RY.

The protein belongs to the MnmA/TRMU family.

The protein resides in the cytoplasm. It catalyses the reaction S-sulfanyl-L-cysteinyl-[protein] + uridine(34) in tRNA + AH2 + ATP = 2-thiouridine(34) in tRNA + L-cysteinyl-[protein] + A + AMP + diphosphate + H(+). In terms of biological role, catalyzes the 2-thiolation of uridine at the wobble position (U34) of tRNA, leading to the formation of s(2)U34. The sequence is that of tRNA-specific 2-thiouridylase MnmA from Verminephrobacter eiseniae (strain EF01-2).